Consider the following 217-residue polypeptide: Cytidylate kinase (217 aa).

10-18 (GPAGAGKST) is a binding site for ATP.

It belongs to the cytidylate kinase family. Type 1 subfamily.

It localises to the cytoplasm. It carries out the reaction CMP + ATP = CDP + ADP. It catalyses the reaction dCMP + ATP = dCDP + ADP. In Clostridium botulinum (strain Langeland / NCTC 10281 / Type F), this protein is Cytidylate kinase.